The chain runs to 213 residues: Peroxiredoxin-5, mitochondrial (213 aa).

The transit peptide at Met1–Thr51 directs the protein to the mitochondrion. The region spanning Ile55–Leu213 is the Thioredoxin domain. At Lys74 the chain carries N6-acetyllysine. At Lys82 the chain carries N6-acetyllysine; alternate. N6-succinyllysine; alternate is present on Lys82. Cys99 acts as the Cysteine sulfenic acid (-SOH) intermediate in catalysis. Residue Cys99 is the site of S-palmitoyl cysteine attachment. Cysteines 99 and 203 form a disulfide. Lys115 carries the post-translational modification N6-succinyllysine. Ser170 and Ser181 each carry phosphoserine. Residues Ser211–Leu213 carry the Microbody targeting signal motif.

The protein belongs to the peroxiredoxin family. Prx5 subfamily. In terms of assembly, monomer. S-palmitoylated. Palmitoylation occurs on the active site, inhibiting its reactivity; therefore PRDX5 palmitoylation status determines its antioxidant capacity. Post-translationally, S-palmitoylated. Depalmitoylated by ABHD10.

The protein localises to the mitochondrion. It localises to the cytoplasm. It is found in the peroxisome matrix. The enzyme catalyses a hydroperoxide + [thioredoxin]-dithiol = an alcohol + [thioredoxin]-disulfide + H2O. Thiol-specific peroxidase that catalyzes the reduction of hydrogen peroxide and organic hydroperoxides to water and alcohols, respectively. Plays a role in cell protection against oxidative stress by detoxifying peroxides and as sensor of hydrogen peroxide-mediated signaling events. The chain is Peroxiredoxin-5, mitochondrial from Rattus norvegicus (Rat).